Reading from the N-terminus, the 908-residue chain is Glutamate receptor ionotropic, kainate 2 (908 aa).

A signal peptide spans 1-31 (MKIIFPILSNPVFRRTVKLLLCLLWIGYSQG). The Extracellular segment spans residues 32–561 (TTHVLRFGGI…VFSFLNPLSP (530 aa)). 7 N-linked (GlcNAc...) asparagine glycosylation sites follow: N67, N73, N275, N378, N412, N423, and N430. A disulfide bridge connects residues C96 and C347. 3 residues coordinate L-glutamate: P516, A518, and R523. N-linked (GlcNAc...) asparagine glycosylation is present at N546. Residues 562–582 (DIWMYILLAYLGVSCVLFVIA) form a helical membrane-spanning segment. Topologically, residues 583–635 (RFSPYEWYNPHPCNPDSDVVENNFTLLNSFWFGVGALMQQGSELMPKALSTRI) are cytoplasmic. A helical transmembrane segment spans residues 636-656 (VGGIWWFFTLIIISSYTANLA). At 657 to 819 (AFLTVERMES…KEASALGVQN (163 aa)) the chain is on the extracellular side. The L-glutamate site is built by A689, T690, and E738. The cysteines at positions 750 and 804 are disulfide-linked. N-linked (GlcNAc...) asparagine glycosylation is present at N751. The chain crosses the membrane as a helical span at residues 820-840 (IGGIFIVLAAGLVLSVFVAVG). Residues 841–908 (EFLYKSKKNA…RRLPGKETMA (68 aa)) are Cytoplasmic-facing. 2 positions are modified to phosphoserine; by PKC: S846 and S868. K886 is covalently cross-linked (Glycyl lysine isopeptide (Lys-Gly) (interchain with G-Cter in SUMO1)).

This sequence belongs to the glutamate-gated ion channel (TC 1.A.10.1) family. GRIK2 subfamily. Homotetramer and heterotetramer with GRIK5. Tetramers may be formed by the dimerization of dimers. Assembles into a kainate-gated homomeric channel that does not bind AMPA. Can form functional heteromeric receptors with GRIK5. Can form functional heteromeric receptors with GRIK3 and GRIK4. Interacts with DLG4. Interacts with NETO2. Interacts (via C-terminus) with KLHL17 (via kelch repeats); the interaction targets GRIK2 for degradation via ubiquitin-proteasome pathway. Sumoylation mediates kainate receptor-mediated endocytosis and regulates synaptic transmission. Sumoylation is enhanced by PIAS3 and desumoylated by SENP1. In terms of processing, ubiquitinated. Ubiquitination regulates the GRIK2 levels at the synapse by leading kainate receptor degradation through proteasome. Post-translationally, phosphorylated by PKC at Ser-868 upon agonist activation, this directly enhance sumoylation. In terms of tissue distribution, expression is higher in cerebellum than in cerebral cortex.

Its subcellular location is the cell membrane. It localises to the postsynaptic cell membrane. The enzyme catalyses Ca(2+)(in) = Ca(2+)(out). It carries out the reaction Na(+)(in) = Na(+)(out). Cold receptor activity activated by temperatures between 10-19 degrees Celsius. In terms of biological role, ionotropic glutamate receptor that functions as a cation permeable ligand-gated ion channel, gated by L-glutamate and the glutamatergic agonist kainic acid. L-glutamate acts as an excitatory neurotransmitter at many synapses in the central nervous system. Binding of the excitatory neurotransmitter L-glutamate induces a conformation change, leading to the opening of the cation channel, and thereby converts the chemical signal to an electrical impulse. The receptor then desensitizes rapidly and enters a transient inactive state, characterized by the presence of bound agonist. Modulates cell surface expression of NETO2. In association with GRIK3, involved in presynaptic facilitation of glutamate release at hippocampal mossy fiber synapses. Independent of its ionotropic glutamate receptor activity, acts as a thermoreceptor conferring sensitivity to cold temperatures. Functions in dorsal root ganglion neurons. This is Glutamate receptor ionotropic, kainate 2 (GRIK2) from Homo sapiens (Human).